The sequence spans 247 residues: Probable proteasome subunit alpha type-5 (247 aa).

A Phosphothreonine modification is found at threonine 55.

The protein belongs to the peptidase T1A family. In terms of assembly, the 26S proteasome consists of a 20S proteasome core and two 19S regulatory subunits. The 20S proteasome core is composed of 28 subunits that are arranged in four stacked rings, resulting in a barrel-shaped structure. The two end rings are each formed by seven alpha subunits, and the two central rings are each formed by seven beta subunits. The catalytic chamber with the active sites is on the inside of the barrel.

The protein localises to the cytoplasm. It localises to the nucleus. The proteasome is a multicatalytic proteinase complex which is characterized by its ability to cleave peptides with Arg, Phe, Tyr, Leu, and Glu adjacent to the leaving group at neutral or slightly basic pH. The proteasome has an ATP-dependent proteolytic activity. The protein is Probable proteasome subunit alpha type-5 (pup2) of Schizosaccharomyces pombe (strain 972 / ATCC 24843) (Fission yeast).